Consider the following 327-residue polypeptide: Methionyl-tRNA formyltransferase (327 aa).

Position 121–124 (121–124 (SLLP)) interacts with (6S)-5,6,7,8-tetrahydrofolate.

The protein belongs to the Fmt family.

It catalyses the reaction L-methionyl-tRNA(fMet) + (6R)-10-formyltetrahydrofolate = N-formyl-L-methionyl-tRNA(fMet) + (6S)-5,6,7,8-tetrahydrofolate + H(+). Functionally, attaches a formyl group to the free amino group of methionyl-tRNA(fMet). The formyl group appears to play a dual role in the initiator identity of N-formylmethionyl-tRNA by promoting its recognition by IF2 and preventing the misappropriation of this tRNA by the elongation apparatus. This is Methionyl-tRNA formyltransferase from Paraburkholderia phymatum (strain DSM 17167 / CIP 108236 / LMG 21445 / STM815) (Burkholderia phymatum).